Consider the following 414-residue polypeptide: Esterase FrsA (414 aa).

The protein belongs to the FrsA family.

It carries out the reaction a carboxylic ester + H2O = an alcohol + a carboxylate + H(+). Functionally, catalyzes the hydrolysis of esters. The polypeptide is Esterase FrsA (Escherichia fergusonii (strain ATCC 35469 / DSM 13698 / CCUG 18766 / IAM 14443 / JCM 21226 / LMG 7866 / NBRC 102419 / NCTC 12128 / CDC 0568-73)).